The chain runs to 209 residues: Small ribosomal subunit protein uS3 (209 aa).

The region spanning 38–107 (IRKIIKNKYY…RVVINIEEIK (70 aa)) is the KH type-2 domain.

The protein belongs to the universal ribosomal protein uS3 family. Part of the 30S ribosomal subunit. Forms a tight complex with proteins S10 and S14.

Its function is as follows. Binds the lower part of the 30S subunit head. Binds mRNA in the 70S ribosome, positioning it for translation. The protein is Small ribosomal subunit protein uS3 of Thermotoga maritima (strain ATCC 43589 / DSM 3109 / JCM 10099 / NBRC 100826 / MSB8).